We begin with the raw amino-acid sequence, 116 residues long: Alpha-defensin 29 (116 aa).

The signal sequence occupies residues 1-19; the sequence is MKTLVLLSALVLPCFQVQA. Residues 20-60 constitute a propeptide that is removed on maturation; that stretch reads DPIQNTDEETKTEEQPEEEDQAVSVSFGGTEGSALQDVAQR. The interval 22 to 44 is disordered; the sequence is IQNTDEETKTEEQPEEEDQAVSV. Tandem repeats lie at residues 65–67, 68–70, 71–73, 74–76, 77–79, 80–82, 83–85, 86–88, and 89–91. The tract at residues 65–70 is 2 X 3 AA tandem repeats of C-R-X; it reads CRKCRV. A 3 X 3 AA tandem repeats of C-Q-X region spans residues 71–79; the sequence is CQKCQVCQK. Positions 80-91 are 4 X 3 AA tandem repeats of C-P-X; it reads CPVCPTCPQCPK.

It belongs to the alpha-defensin family. In terms of tissue distribution, small bowel.

Its subcellular location is the secreted. Its function is as follows. Apparent precursor of a secreted, cationic, proline- and cysteine-rich peptide that contains Cys-Pro-Xaa repeats. Unlike cryptdin, the proposed mature peptide region lacks the structural motif characteristic of defensins. This Mus musculus (Mouse) protein is Alpha-defensin 29.